A 314-amino-acid chain; its full sequence is Cathepsin L 2 (314 aa).

The N-terminal stretch at 1 to 24 (MMLLGASLYLNNTQEVSDEIDTAN) is a signal peptide. The propeptide at 25 to 109 (LYANWKMKYN…NASNANFQYK (85 aa)) is activation peptide. 3 disulfide bridges follow: Cys-132–Cys-175, Cys-166–Cys-207, and Cys-259–Cys-302. Cys-135 is a catalytic residue. Catalysis depends on residues His-265 and Asn-282.

It belongs to the peptidase C1 family.

It is found in the secreted. It carries out the reaction Specificity close to that of papain. As compared to cathepsin B, cathepsin L exhibits higher activity toward protein substrates, but has little activity on Z-Arg-Arg-NHMec, and no peptidyl-dipeptidase activity.. May be involved in extracellular digestion. This Paramecium tetraurelia protein is Cathepsin L 2.